A 47-amino-acid polypeptide reads, in one-letter code: Protein PsbN (47 aa).

A helical membrane pass occupies residues 9–31; sequence YSLLIAMVTITFGLTGYGLYTAF.

It belongs to the PsbN family.

The protein localises to the cellular thylakoid membrane. May play a role in photosystem I and II biogenesis. The chain is Protein PsbN from Prochlorococcus marinus (strain MIT 9303).